The chain runs to 369 residues: DNA polymerase IV 2 (369 aa).

The UmuC domain maps to 17 to 201; sequence VFHVDMDSFF…LPVSRIPGVG (185 aa). 2 residues coordinate Mg(2+): Asp-21 and Asp-119. Glu-120 is a catalytic residue.

Belongs to the DNA polymerase type-Y family. As to quaternary structure, monomer. Mg(2+) is required as a cofactor.

It localises to the cytoplasm. It catalyses the reaction DNA(n) + a 2'-deoxyribonucleoside 5'-triphosphate = DNA(n+1) + diphosphate. Functionally, poorly processive, error-prone DNA polymerase involved in untargeted mutagenesis. Copies undamaged DNA at stalled replication forks, which arise in vivo from mismatched or misaligned primer ends. These misaligned primers can be extended by PolIV. Exhibits no 3'-5' exonuclease (proofreading) activity. May be involved in translesional synthesis. The protein is DNA polymerase IV 2 (dbh2) of Methanosarcina mazei (strain ATCC BAA-159 / DSM 3647 / Goe1 / Go1 / JCM 11833 / OCM 88) (Methanosarcina frisia).